Reading from the N-terminus, the 952-residue chain is Germ layers disorganized gldi-3 (952 aa).

Positions 39 to 100 (KSFGRATTND…NGTYINDRRL (62 aa)) constitute an FHA domain. Disordered regions lie at residues 174–220 (IGPR…MPST), 483–639 (GTPK…ESTV), and 652–866 (AAQS…KERC). Polar residues-rich tracts occupy residues 179–195 (PSTTNKVLQQEADSTNG) and 202–220 (NRASSASSATPEDTQMPST). The span at 523-537 (EESEILDVVGTDEPD) shows a compositional bias: acidic residues. Residues 553 to 568 (PEDHGRQTQNKIDKNV) show a composition bias toward basic and acidic residues. Polar residues-rich tracts occupy residues 569–584 (RMSSTPRIDAQSTPSA) and 600–620 (VTSSKSAQDVSTPSTTPNPVS). Low complexity predominate over residues 662–679 (SVSNTTSSTSASLTTSSV). A compositionally biased stretch (basic and acidic residues) spans 685 to 706 (TSSKENTDQKRAVDDSSDESAR). The span at 715–724 (SATPSSTPAE) shows a compositional bias: low complexity. Basic and acidic residues predominate over residues 725–742 (SSKRKQKDTSSRKMKQLD). Basic residues predominate over residues 761–772 (TKRRDKARRSTR). The segment covering 789–800 (VEDEDETDDVQE) has biased composition (acidic residues). Composition is skewed to basic and acidic residues over residues 823-832 (IKERKTKDKD) and 856-866 (PPKTEPSKERC).

The protein localises to the nucleus. In terms of biological role, potential transcription factor that may play a role in the regulation of genes involved in cell cycle G1/S transition. May bind to regulatory elements of genes. This Caenorhabditis elegans protein is Germ layers disorganized gldi-3.